The primary structure comprises 496 residues: Glycerol kinase 2 (496 aa).

Threonine 11 is an ADP binding site. ATP is bound by residues threonine 11, threonine 12, and serine 13. Threonine 11 is a sn-glycerol 3-phosphate binding site. Position 15 (arginine 15) interacts with ADP. Sn-glycerol 3-phosphate is bound by residues arginine 81, glutamate 82, tyrosine 133, and aspartate 242. Positions 81, 82, 133, 242, and 243 each coordinate glycerol. Residues threonine 264 and glycine 307 each coordinate ADP. The ATP site is built by threonine 264, glycine 307, glutamine 311, and glycine 408. 2 residues coordinate ADP: glycine 408 and asparagine 412.

Belongs to the FGGY kinase family.

The catalysed reaction is glycerol + ATP = sn-glycerol 3-phosphate + ADP + H(+). The protein operates within polyol metabolism; glycerol degradation via glycerol kinase pathway; sn-glycerol 3-phosphate from glycerol: step 1/1. With respect to regulation, inhibited by fructose 1,6-bisphosphate (FBP). In terms of biological role, key enzyme in the regulation of glycerol uptake and metabolism. Catalyzes the phosphorylation of glycerol to yield sn-glycerol 3-phosphate. The protein is Glycerol kinase 2 of Thermotoga maritima (strain ATCC 43589 / DSM 3109 / JCM 10099 / NBRC 100826 / MSB8).